Reading from the N-terminus, the 399-residue chain is Probable sugar efflux transporter (399 aa).

12 helical membrane passes run 15-35, 50-70, 81-101, 103-123, 136-156, 168-188, 209-229, 246-266, 273-293, 301-321, 333-353, and 364-384; these read VVTLAIAAFIFNTTEFAPVGL, VGMMLTIYAWVVALMSLPFML, LIGLFILFIASHVLSFFAWSF, VLVISRIGIAFAHAVFWSITS, AQALSLIATGTALAMVFGIPI, MTFLAIGLGALATLACLVKLL, PALVSVYILTVVVVTAHYTAY, FATVLLLILGGAGIIGSILFG, ASGLISIAIGLLLACLLLLLP, LMLLSIFWGVAIMIIGLGMQV, VAMSLFSGIFNIGIGAGALVG, and SIGYIGAIPALAALVWSLMIF.

It belongs to the major facilitator superfamily. SotB (TC 2.A.1.2) family.

The protein localises to the cell inner membrane. Functionally, involved in the efflux of sugars. The physiological role may be the reduction of the intracellular concentration of toxic sugars or sugar metabolites. This is Probable sugar efflux transporter from Klebsiella pneumoniae (strain 342).